The following is a 181-amino-acid chain: ATP-dependent protease subunit HslV (181 aa).

Thr7 is a catalytic residue. Gly164, Cys167, and Thr170 together coordinate Na(+).

It belongs to the peptidase T1B family. HslV subfamily. As to quaternary structure, a double ring-shaped homohexamer of HslV is capped on each side by a ring-shaped HslU homohexamer. The assembly of the HslU/HslV complex is dependent on binding of ATP.

It localises to the cytoplasm. The catalysed reaction is ATP-dependent cleavage of peptide bonds with broad specificity.. Its activity is regulated as follows. Allosterically activated by HslU binding. Protease subunit of a proteasome-like degradation complex believed to be a general protein degrading machinery. This Shouchella clausii (strain KSM-K16) (Alkalihalobacillus clausii) protein is ATP-dependent protease subunit HslV.